Reading from the N-terminus, the 92-residue chain is Cell division topological specificity factor (92 aa).

This sequence belongs to the MinE family.

Functionally, prevents the cell division inhibition by proteins MinC and MinD at internal division sites while permitting inhibition at polar sites. This ensures cell division at the proper site by restricting the formation of a division septum at the midpoint of the long axis of the cell. This is Cell division topological specificity factor from Syntrophobacter fumaroxidans (strain DSM 10017 / MPOB).